The chain runs to 434 residues: Tryptophan synthase beta chain (434 aa).

An N6-(pyridoxal phosphate)lysine modification is found at K92. Residues V411–S434 are disordered.

Belongs to the TrpB family. Tetramer of two alpha and two beta chains. The cofactor is pyridoxal 5'-phosphate.

It carries out the reaction (1S,2R)-1-C-(indol-3-yl)glycerol 3-phosphate + L-serine = D-glyceraldehyde 3-phosphate + L-tryptophan + H2O. It functions in the pathway amino-acid biosynthesis; L-tryptophan biosynthesis; L-tryptophan from chorismate: step 5/5. The beta subunit is responsible for the synthesis of L-tryptophan from indole and L-serine. The polypeptide is Tryptophan synthase beta chain (Polaromonas naphthalenivorans (strain CJ2)).